A 406-amino-acid polypeptide reads, in one-letter code: Kelch domain-containing protein 2 (406 aa).

6 Kelch repeats span residues 31–85 (ERSG…NTEG), 92–136 (SGSC…ERID), 148–207 (LGVW…TWSQ), 221–259 (HACATVGNRGFVFGGRYRDARMNDLHYLNLDTWEWNELI), 271–311 (HSLT…IQFN), and 322–359 (HTACASDEGEVIVFGGCANNLLVHHRAAHSNEILIFSV).

In terms of assembly, component of a CRL2(KLHDC2) E3 ubiquitin-protein ligase complex, also named ECS(KLHDC2) complex, composed of CUL2, Elongin BC (ELOB and ELOC), RBX1 and substrate-specific adapter KLHDC2. May form oligomers as a KLHDC2-ELOB-ELOC complex; this interaction is autoinhibitory for the E3 ligase complex as the substrate-binding site of KLHDC2 is blocked in the oligomer. Interacts with CREB3; interaction is direct and specific as it does not interact with CREB1, ATF4, ATF6, JUN, FOS, CEBPA or herpes simplex virus transactivator VP16. In terms of processing, autoubiquitinated by the CRL2(KLHDC2) E3 ligase complex. As to expression, widely expressed, with high levels in skeletal muscle, heart, pancreas and liver. Undetectable in peripheral blood leukocytes.

The protein resides in the nucleus. It functions in the pathway protein modification; protein ubiquitination. Substrate-recognition component of a Cul2-RING (CRL2) E3 ubiquitin-protein ligase complex of the DesCEND (destruction via C-end degrons) pathway, which recognizes a C-degron located at the extreme C terminus of target proteins, leading to their ubiquitination and degradation. The C-degron recognized by the DesCEND pathway is usually a motif of less than ten residues and can be present in full-length proteins, truncated proteins or proteolytically cleaved forms. The CRL2(KLHDC2) complex specifically recognizes proteins with a diglycine (Gly-Gly) at the C-terminus, leading to their ubiquitination and degradation. The CRL2(KLHDC2) complex mediates ubiquitination and degradation of truncated SELENOK and SELENOS selenoproteins produced by failed UGA/Sec decoding, which end with a diglycine. The CRL2(KLHDC2) complex also recognizes proteolytically cleaved proteins ending with Gly-Gly, such as the N-terminal fragment of USP1, leading to their degradation. May also act as an indirect repressor of CREB3-mediated transcription by interfering with CREB3-DNA-binding. The protein is Kelch domain-containing protein 2 of Homo sapiens (Human).